Here is a 99-residue protein sequence, read N- to C-terminus: Cytochrome c-555 (99 aa).

Cysteine 23, cysteine 26, histidine 27, and methionine 73 together coordinate heme c.

Binds 1 heme c group covalently per subunit.

The chain is Cytochrome c-555 from Prosthecochloris aestuarii.